Consider the following 305-residue polypeptide: Protoheme IX farnesyltransferase (305 aa).

A run of 9 helical transmembrane segments spans residues valine 28 to valine 48, valine 52 to histidine 72, isoleucine 102 to leucine 122, threonine 123 to lysine 143, isoleucine 150 to glycine 170, alanine 176 to isoleucine 196, isoleucine 221 to methionine 241, serine 243 to isoleucine 263, and isoleucine 282 to leucine 302.

The protein belongs to the UbiA prenyltransferase family. Protoheme IX farnesyltransferase subfamily.

The protein localises to the cell inner membrane. It catalyses the reaction heme b + (2E,6E)-farnesyl diphosphate + H2O = Fe(II)-heme o + diphosphate. The protein operates within porphyrin-containing compound metabolism; heme O biosynthesis; heme O from protoheme: step 1/1. Functionally, converts heme B (protoheme IX) to heme O by substitution of the vinyl group on carbon 2 of heme B porphyrin ring with a hydroxyethyl farnesyl side group. This chain is Protoheme IX farnesyltransferase, found in Coxiella burnetii (strain CbuK_Q154) (Coxiella burnetii (strain Q154)).